Reading from the N-terminus, the 95-residue chain is Mitochondrial import inner membrane translocase subunit Tim13 (95 aa).

Residue methionine 1 is modified to N-acetylmethionine. The residue at position 7 (serine 7) is a Phosphoserine. Residues 46–69 carry the Twin CX3C motif motif; the sequence is CFRKCIGKPGGSLDNSEQKCIAMC. Cystine bridges form between cysteine 46-cysteine 69 and cysteine 50-cysteine 65. The residue at position 53 (lysine 53) is an N6-succinyllysine.

Belongs to the small Tim family. In terms of assembly, heterohexamer; composed of 3 copies of TIMM8 (TIMM8A or TIMM8B) and 3 copies of TIMM13, named soluble 70 kDa complex. Associates with the TIM22 complex, whose core is composed of TIMM22. As to expression, ubiquitous, with highest expression in heart, kidney, liver and skeletal muscle.

Its subcellular location is the mitochondrion inner membrane. Its function is as follows. Mitochondrial intermembrane chaperone that participates in the import and insertion of some multi-pass transmembrane proteins into the mitochondrial inner membrane. Also required for the transfer of beta-barrel precursors from the TOM complex to the sorting and assembly machinery (SAM complex) of the outer membrane. Acts as a chaperone-like protein that protects the hydrophobic precursors from aggregation and guide them through the mitochondrial intermembrane space. The TIMM8-TIMM13 complex mediates the import of proteins such as TIMM23, SLC25A12/ARALAR1 and SLC25A13/ARALAR2, while the predominant TIMM9-TIMM10 70 kDa complex mediates the import of much more proteins. This Homo sapiens (Human) protein is Mitochondrial import inner membrane translocase subunit Tim13 (TIMM13).